The sequence spans 213 residues: UPF0319 protein HAPS_0727 (213 aa).

The first 21 residues, 1–21, serve as a signal peptide directing secretion; sequence MKLGKIALAMTALIAGTTAFA.

It belongs to the UPF0319 family.

This Glaesserella parasuis serovar 5 (strain SH0165) (Haemophilus parasuis) protein is UPF0319 protein HAPS_0727.